Consider the following 286-residue polypeptide: Non-homologous end joining protein Ku (286 aa).

One can recognise a Ku domain in the interval 10–175 (TVGLVSFPVR…EEVREPDFVV (166 aa)). A compositionally biased stretch (basic and acidic residues) spans 226–242 (ERQERQRREAGEVRQAD). The segment at 226-270 (ERQERQRREAGEVRQADETDEAAETEVPEVDIPASRAPGETGGEL) is disordered. Acidic residues predominate over residues 243–254 (ETDEAAETEVPE).

Belongs to the prokaryotic Ku family. As to quaternary structure, homodimer. Interacts with LigD.

Functionally, with LigD forms a non-homologous end joining (NHEJ) DNA repair enzyme, which repairs dsDNA breaks with reduced fidelity. Binds linear dsDNA with 5'- and 3'- overhangs but not closed circular dsDNA nor ssDNA. Recruits and stimulates the ligase activity of LigD. In Actinosynnema mirum (strain ATCC 29888 / DSM 43827 / JCM 3225 / NBRC 14064 / NCIMB 13271 / NRRL B-12336 / IMRU 3971 / 101), this protein is Non-homologous end joining protein Ku.